Here is a 62-residue protein sequence, read N- to C-terminus: UPF0434 protein R03186 (62 aa).

Belongs to the UPF0434 family.

The protein is UPF0434 protein R03186 of Rhizobium meliloti (strain 1021) (Ensifer meliloti).